A 320-amino-acid polypeptide reads, in one-letter code: MSFSAVTKGELARIYSKDRCCQLAELAALIRMCGTLQLVGGAQKLNIKLTTENPAIARKLFKLFKDLFGVHIEVMIRRNPRLRKNNHYLMVVTHGMGSTDILEKVKILKKEANSFDISYGVPLMLLQNRCCRRAYLRGAFLGGGSVSDPEKTYHLEFVTHSHEHSESLRDLINDFQLTSKIVERKGSYVVYLKEGDQIVDLLNIMEAHSALLELENVRIYKQMRNDVNRIVNCETANLSKTVDAAIRQIENIEYIKNTVGLGYLPENLREIAEIRLEYEDATLKELGEMLSPAIGKSGVNHRLRKIDEIATKLQEGKIKN.

Positions 282–315 (TLKELGEMLSPAIGKSGVNHRLRKIDEIATKLQE) form a DNA-binding region, H-T-H motif.

It belongs to the WhiA family.

In terms of biological role, involved in cell division and chromosome segregation. The polypeptide is Probable cell division protein WhiA (Alkaliphilus oremlandii (strain OhILAs) (Clostridium oremlandii (strain OhILAs))).